A 571-amino-acid polypeptide reads, in one-letter code: Peptide-N4-(N-acetyl-beta-glucosaminyl)asparagine amidase A (571 aa).

12 N-linked (GlcNAc...) asparagine glycosylation sites follow: Asn-121, Asn-143, Asn-197, Asn-241, Asn-318, Asn-367, Asn-390, Asn-423, Asn-457, Asn-481, Asn-524, and Asn-529.

As to quaternary structure, heterodimer of a large and a small chain. Post-translationally, is highly glycosylated and is largly resistant against self-deglycosylation.

It catalyses the reaction Hydrolysis of an N(4)-(acetyl-beta-D-glucosaminyl)asparagine residue in which the glucosamine residue may be further glycosylated, to yield a (substituted) N-acetyl-beta-D-glucosaminylamine and a peptide containing an aspartate residue.. In Prunus dulcis (Almond), this protein is Peptide-N4-(N-acetyl-beta-glucosaminyl)asparagine amidase A.